A 188-amino-acid chain; its full sequence is Xanthine phosphoribosyltransferase (188 aa).

Xanthine-binding residues include Leu20 and Asn27. Residue 127–131 (AYGNA) participates in 5-phospho-alpha-D-ribose 1-diphosphate binding. Lys155 serves as a coordination point for xanthine.

The protein belongs to the purine/pyrimidine phosphoribosyltransferase family. Xpt subfamily. Homodimer.

It localises to the cytoplasm. It carries out the reaction XMP + diphosphate = xanthine + 5-phospho-alpha-D-ribose 1-diphosphate. It functions in the pathway purine metabolism; XMP biosynthesis via salvage pathway; XMP from xanthine: step 1/1. Functionally, converts the preformed base xanthine, a product of nucleic acid breakdown, to xanthosine 5'-monophosphate (XMP), so it can be reused for RNA or DNA synthesis. The chain is Xanthine phosphoribosyltransferase from Parabacteroides distasonis (strain ATCC 8503 / DSM 20701 / CIP 104284 / JCM 5825 / NCTC 11152).